A 115-amino-acid polypeptide reads, in one-letter code: U17-barytoxin-Tl1b (115 aa).

The first 20 residues, 1–20 (MKTIIVFLSLLVLATKFGDA), serve as a signal peptide directing secretion. A propeptide spanning residues 21–74 (KEGVNQKQKKEVTQNEFREEYLNEMAAMSLVQQLEAIERALFENEAGRNSRQKR) is cleaved from the precursor. 3 disulfide bridges follow: Cys-75/Cys-89, Cys-82/Cys-94, and Cys-88/Cys-109.

Belongs to the neurotoxin 14 (magi-1) family. 03 (ICK-30-40) subfamily. As to expression, expressed by the venom gland.

Its subcellular location is the secreted. Its function is as follows. Ion channel inhibitor. This chain is U17-barytoxin-Tl1b, found in Trittame loki (Brush-footed trapdoor spider).